The following is a 377-amino-acid chain: Pseudouridylate synthase RPUSD4, mitochondrial (377 aa).

The tract at residues 51 to 70 is disordered; sequence LRAQKQQQKTKEPAPTNPVQ. Asp153 is a catalytic residue.

This sequence belongs to the pseudouridine synthase RluA family. Interacts with 16S mt-rRNA, mt-tRNA(Phe) and mt-tRNA(Met). Forms a regulatory protein-RNA complex, consisting of RCC1L, NGRN, RPUSD3, RPUSD4, TRUB2, FASTKD2 and 16S mt-rRNA.

Its subcellular location is the mitochondrion matrix. It localises to the nucleus. The protein resides in the cytoplasm. The enzyme catalyses uridine in 5S rRNA = pseudouridine in 5S rRNA. It carries out the reaction a uridine in tRNA = a pseudouridine in tRNA. It catalyses the reaction a uridine in mRNA = a pseudouridine in mRNA. Catalyzes uridine to pseudouridine isomerization (pseudouridylation) of different mitochondrial RNA substrates. Acts on position 1397 in 16S mitochondrial ribosomal RNA (16S mt-rRNA). This modification is required for the assembly of 16S mt-rRNA into a functional mitochondrial ribosome. As a component of a functional protein-RNA module, consisting of RCC1L, NGRN, RPUSD3, RPUSD4, TRUB2, FASTKD2 and 16S mt-rRNA, controls 16S mt-rRNA abundance and is required for intra-mitochondrial translation. Acts on position 39 in mitochondrial tRNA(Phe). Also catalyzes pseudouridylation of mRNAs in nucleus: acts as a regulator of pre-mRNA splicing by mediating pseudouridylation of pre-mRNAs at locations associated with alternatively spliced regions. Pseudouridylation of pre-mRNAs near splice sites directly regulates mRNA splicing and mRNA 3'-end processing. This is Pseudouridylate synthase RPUSD4, mitochondrial from Bos taurus (Bovine).